A 259-amino-acid polypeptide reads, in one-letter code: 1-(5-phosphoribosyl)-5-[(5-phosphoribosylamino)methylideneamino] imidazole-4-carboxamide isomerase (259 aa).

Aspartate 8 functions as the Proton acceptor in the catalytic mechanism. Residue aspartate 129 is the Proton donor of the active site.

Belongs to the HisA/HisF family.

The protein resides in the cytoplasm. The enzyme catalyses 1-(5-phospho-beta-D-ribosyl)-5-[(5-phospho-beta-D-ribosylamino)methylideneamino]imidazole-4-carboxamide = 5-[(5-phospho-1-deoxy-D-ribulos-1-ylimino)methylamino]-1-(5-phospho-beta-D-ribosyl)imidazole-4-carboxamide. The protein operates within amino-acid biosynthesis; L-histidine biosynthesis; L-histidine from 5-phospho-alpha-D-ribose 1-diphosphate: step 4/9. The chain is 1-(5-phosphoribosyl)-5-[(5-phosphoribosylamino)methylideneamino] imidazole-4-carboxamide isomerase from Pelotomaculum thermopropionicum (strain DSM 13744 / JCM 10971 / SI).